The sequence spans 112 residues: Notch-regulated ankyrin repeat-containing protein A (112 aa).

ANK repeat units lie at residues 48–77 (EGQT…DIRL) and 81–110 (EGWS…YSSG).

The protein belongs to the NRARP family.

Regulates independently canonical Wnt and Notch signaling by modulating LEF1 and Notch protein turnover. Stabilizes LEF1, a pivotal transcription factor in the Wnt signaling cascade, by blocking its ubiquitination. Involved in angiogenesis; involved in intersegmental vessel patterning during development. The protein is Notch-regulated ankyrin repeat-containing protein A (nrarpa) of Danio rerio (Zebrafish).